The chain runs to 1065 residues: Alpha-L-arabinofuranosidase (1065 aa).

The first 26 residues, M1–A26, serve as a signal peptide directing secretion. The region spanning V277 to E346 is the BIG2 domain. Positions K997–S1031 are disordered. Residues K1014–S1031 are compositionally biased toward polar residues. Residues V1040–W1060 traverse the membrane as a helical segment.

Belongs to the glycosyl hydrolase 43 family.

It localises to the cell membrane. It catalyses the reaction Hydrolysis of terminal non-reducing alpha-L-arabinofuranoside residues in alpha-L-arabinosides.. Involved in the type II arabinogalactan (AG) side chains degradation. Releases arabinofuranose (Araf) from alpha-1,3-Araf-substituted beta-1,6-galactooligosaccharides. Can use radish root AGP, larch AG and arabinan. Shows weaker activity with gum arabic and arabinoxylan. The sequence is that of Alpha-L-arabinofuranosidase from Bifidobacterium longum subsp. longum (strain ATCC 15707 / DSM 20219 / JCM 1217 / NCTC 11818 / E194b).